Reading from the N-terminus, the 293-residue chain is MTELGNDKAMNLLIITGMSGAGKTVAVQSLEDLGFFCVDNLPPVLIPKFAELVKQSGGSIERVALVIDLRGREFFENLAVTMESLNQMNGLSYHILYLDANDQTLVSRYKETRRRHPLSPNGSPLEGIHAERRLLEEMKGWAHQIIDTSQMKPVQLREKIINQYGQQGSPLTINVLSFGFKYGAPIDADLMFDVRFLPNPHYVEDLRPKTGCDPDVAEYVMQHKDTKEFLEKLTDFLGYTLPHYQREGKSQLVIGIGCTGGKHRSVAIAEHLGEAFGKDFSVRVSHRDMEKNK.

Residue 17–24 (GMSGAGKT) coordinates ATP. 68–71 (DLRG) is a binding site for GTP.

It belongs to the RapZ-like family.

Its function is as follows. Displays ATPase and GTPase activities. The protein is Nucleotide-binding protein BBR47_52620 of Brevibacillus brevis (strain 47 / JCM 6285 / NBRC 100599).